Consider the following 360-residue polypeptide: Chorismate synthase (360 aa).

Positions 48 and 54 each coordinate NADP(+). Residues 125–127 (RSS), 246–247 (NA), glycine 286, 301–305 (KPTSS), and arginine 327 each bind FMN.

This sequence belongs to the chorismate synthase family. Homotetramer. It depends on FMNH2 as a cofactor.

The catalysed reaction is 5-O-(1-carboxyvinyl)-3-phosphoshikimate = chorismate + phosphate. The protein operates within metabolic intermediate biosynthesis; chorismate biosynthesis; chorismate from D-erythrose 4-phosphate and phosphoenolpyruvate: step 7/7. Catalyzes the anti-1,4-elimination of the C-3 phosphate and the C-6 proR hydrogen from 5-enolpyruvylshikimate-3-phosphate (EPSP) to yield chorismate, which is the branch point compound that serves as the starting substrate for the three terminal pathways of aromatic amino acid biosynthesis. This reaction introduces a second double bond into the aromatic ring system. In Haemophilus ducreyi (strain 35000HP / ATCC 700724), this protein is Chorismate synthase.